We begin with the raw amino-acid sequence, 137 residues long: Large ribosomal subunit protein uL16 (137 aa).

Residues 1–22 (MLQPKRTKFRKVQKGRNRGLAH) form a disordered region.

It belongs to the universal ribosomal protein uL16 family. As to quaternary structure, part of the 50S ribosomal subunit.

In terms of biological role, binds 23S rRNA and is also seen to make contacts with the A and possibly P site tRNAs. This Chromohalobacter salexigens (strain ATCC BAA-138 / DSM 3043 / CIP 106854 / NCIMB 13768 / 1H11) protein is Large ribosomal subunit protein uL16.